We begin with the raw amino-acid sequence, 795 residues long: Phenylalanine--tRNA ligase beta subunit (795 aa).

The tRNA-binding domain maps to 39-148 (AGTFNGVVVG…LDAPIGTDLR (110 aa)). The B5 domain maps to 401 to 476 (PKVNTVQLRR…RIYGYNSIPN (76 aa)). Mg(2+)-binding residues include D454, D460, E463, and E464. In terms of domain architecture, FDX-ACB spans 701–794 (SKFPANRRDL…VKQRFNAELR (94 aa)).

The protein belongs to the phenylalanyl-tRNA synthetase beta subunit family. Type 1 subfamily. In terms of assembly, tetramer of two alpha and two beta subunits. The cofactor is Mg(2+).

Its subcellular location is the cytoplasm. The enzyme catalyses tRNA(Phe) + L-phenylalanine + ATP = L-phenylalanyl-tRNA(Phe) + AMP + diphosphate + H(+). This Haemophilus influenzae (strain 86-028NP) protein is Phenylalanine--tRNA ligase beta subunit.